The following is a 393-amino-acid chain: Putative bacilysin exporter BacE (393 aa).

Helical transmembrane passes span 11–31 (LLFG…ALLI), 43–63 (SGVI…GVLV), 69–89 (VKIM…LTFL), 92–112 (GEYP…GVFF), 133–155 (LFAK…FLLG), 160–177 (LAVA…FFIS), 215–235 (MFTM…FPIV), 244–264 (IGNF…AALV), 287–307 (ALFL…LFFI), and 353–373 (IVDA…LFLH).

It belongs to the major facilitator superfamily.

It localises to the cell membrane. Part of the bacilysin biosynthesis operon. May be involved in self-resistance to bacilysin by permitting efflux of this antibiotic. The polypeptide is Putative bacilysin exporter BacE (bacE) (Bacillus subtilis).